The chain runs to 312 residues: NADH-ubiquinone oxidoreductase chain 1 (312 aa).

The next 8 membrane-spanning stretches (helical) occupy residues 3-23, 77-97, 104-124, 150-170, 174-194, 226-246, 250-270, and 289-309; these read FILS…SVAF, ISPI…PFFV, LGGL…MVAG, LALI…VYFF, IYVW…TISL, LIFM…CVIF, DVFN…FIWA, and CFLS…ILLF.

This sequence belongs to the complex I subunit 1 family.

The protein resides in the mitochondrion inner membrane. The enzyme catalyses a ubiquinone + NADH + 5 H(+)(in) = a ubiquinol + NAD(+) + 4 H(+)(out). In terms of biological role, core subunit of the mitochondrial membrane respiratory chain NADH dehydrogenase (Complex I) that is believed to belong to the minimal assembly required for catalysis. Complex I functions in the transfer of electrons from NADH to the respiratory chain. The immediate electron acceptor for the enzyme is believed to be ubiquinone. This Drosophila subobscura (Fruit fly) protein is NADH-ubiquinone oxidoreductase chain 1 (mt:ND1).